A 461-amino-acid chain; its full sequence is Photosystem II CP43 reaction center protein (461 aa).

Residues 1 to 48 (MVTLSSNSIFATNRDQESSGFAWWAGNARLINLSGKLLGAHVAHAGLI) are Cytoplasmic-facing. The chain crosses the membrane as a helical span at residues 49–71 (VFWAGAMTLFELAHFIPEKPMYE). Topologically, residues 72–111 (QGLILIPHIATLGWGVGPGGEVVDTFPFFVVGVVHLISSA) are lumenal. A helical membrane pass occupies residues 112 to 133 (VLGFGGVYHAIRGPETLEEYSS). Residues 134 to 155 (FFGYDWKDKNKMTTILGFHLIV) lie on the Cytoplasmic side of the membrane. A helical transmembrane segment spans residues 156-178 (LGIGALLLVAKAMFFGGLYDTWA). Topologically, residues 179 to 232 (PGGGDVRVITNPTLDPRVIFGYLLKSPFGGEGWIVSVNNLEDVVGGHIWIGLIC) are lumenal. The chain crosses the membrane as a helical span at residues 233–253 (IAGGIWHILTTPFGWARRAFI). Topologically, residues 254-268 (WSGEAYLSYSLGALS) are cytoplasmic. The chain crosses the membrane as a helical span at residues 269 to 289 (MMGFIATCFVWFNNTVYPSEF). The Lumenal segment spans residues 290-424 (YGPTGPEASQ…ATSHFVLAFF (135 aa)). Glutamate 355 contacts [CaMn4O5] cluster. Residues 425–449 (FLVGHLWHAGRARAAAAGFEKGIDR) traverse the membrane as a helical segment. The Cytoplasmic portion of the chain corresponds to 450–461 (ESEPVLSMPSLD).

In terms of assembly, PSII is composed of 1 copy each of membrane proteins PsbA, PsbB, PsbC, PsbD, PsbE, PsbF, PsbH, PsbI, PsbJ, PsbK, PsbL, PsbM, PsbT, PsbX, PsbY, PsbZ, Psb30/Ycf12, peripheral proteins PsbO, CyanoQ (PsbQ), PsbU, PsbV and a large number of cofactors. It forms dimeric complexes. Part of a photosystem II (PSII) assembly intermediate complex PSII-I; crystallized from a strain deleted of psbJ, it forms monomeric PSII before addition of the oxygen evolving complex. PSII-I includes 3 assembly factors not found in mature PSII (Psb27, Psb28 and Psb34), and CP43 (this protein) is not in its mature conformation. The cofactor is Binds multiple chlorophylls and provides some of the ligands for the Ca-4Mn-5O cluster of the oxygen-evolving complex. It may also provide a ligand for a Cl- that is required for oxygen evolution. PSII binds additional chlorophylls, carotenoids and specific lipids..

It is found in the cellular thylakoid membrane. One of the components of the core complex of photosystem II (PSII). It binds chlorophyll and helps catalyze the primary light-induced photochemical processes of PSII. PSII is a light-driven water:plastoquinone oxidoreductase, using light energy to abstract electrons from H(2)O, generating O(2) and a proton gradient subsequently used for ATP formation. The chain is Photosystem II CP43 reaction center protein from Thermosynechococcus vestitus (strain NIES-2133 / IAM M-273 / BP-1).